A 309-amino-acid chain; its full sequence is Taste receptor type 2 member 31 (309 aa).

The Extracellular segment spans residues 1 to 2 (MT). The chain crosses the membrane as a helical span at residues 3–23 (TFIPIIFSSLVVVIFVIGNFA). The Cytoplasmic portion of the chain corresponds to 24–55 (NGFIALVNSIEWFKRQKISFADQILTALAVSR). The helical transmembrane segment at 56–76 (VGLLWVLLLNWYSTVLNPAFY) threads the bilayer. Residues 77–100 (SVEVRTTAYNVWAVTGHFSNWLAT) are Extracellular-facing. A helical transmembrane segment spans residues 101 to 121 (SLSIFYLLKIANFSNLIFLHL). Topologically, residues 122–126 (KRRVK) are cytoplasmic. The helical transmembrane segment at 127–147 (SVILVMLLGPLLFLACQLFMI) threads the bilayer. The Extracellular portion of the chain corresponds to 148-181 (NMKEIVRTKEYEGNMTWKIKLRSAVYLSDATVTT). Residue N161 is glycosylated (N-linked (GlcNAc...) asparagine). A helical transmembrane segment spans residues 182 to 202 (LGNLVPFTLTLLCFLLLICSL). Residues 203–229 (CKHLKKMQLHGKGSQDPSTKVHIKVLQ) lie on the Cytoplasmic side of the membrane. A helical transmembrane segment spans residues 230 to 250 (TVISFLLLCAIYFLSIMISVW). The Extracellular segment spans residues 251–259 (SFGSLKNKP). The chain crosses the membrane as a helical span at residues 260 to 280 (VFMFCKAMRFSYPSIHPFILI). Residues 281-309 (WGNKKLKQTFLSVLRQVRYWVKGEKPSSP) are Cytoplasmic-facing.

This sequence belongs to the G-protein coupled receptor T2R family.

It localises to the membrane. Functionally, receptor that may play a role in the perception of bitterness and is gustducin-linked. May play a role in sensing the chemical composition of the gastrointestinal content. The activity of this receptor may stimulate alpha gustducin, mediate PLC-beta-2 activation and lead to the gating of TRPM5. The protein is Taste receptor type 2 member 31 (TAS2R31) of Pan troglodytes (Chimpanzee).